The primary structure comprises 182 residues: Translation initiation factor IF-3 (182 aa).

The protein belongs to the IF-3 family. Monomer.

The protein resides in the cytoplasm. Its function is as follows. IF-3 binds to the 30S ribosomal subunit and shifts the equilibrium between 70S ribosomes and their 50S and 30S subunits in favor of the free subunits, thus enhancing the availability of 30S subunits on which protein synthesis initiation begins. This chain is Translation initiation factor IF-3, found in Endomicrobium trichonymphae.